We begin with the raw amino-acid sequence, 185 residues long: MVNSWRVQQAAREIRAGAVIAYPTEAVWGLGCDPWNEEAVDRLLAIKNRSVDKGLILVADNIRQFDFLFEDFPQDWIDRMASTWPGPNTWLVPHQNLLPEWVTGVHDTVALRVSDHPQVRDLCSLVGPLISTSANPQGRPAARTRLRVEQYFRGQVDLVLGGALGGRKNPSLIRDLATGNIVRPA.

The 182-residue stretch at 4 to 185 (SWRVQQAARE…LATGNIVRPA (182 aa)) folds into the YrdC-like domain.

Belongs to the SUA5 family. TsaC subfamily.

The protein localises to the cytoplasm. The enzyme catalyses L-threonine + hydrogencarbonate + ATP = L-threonylcarbamoyladenylate + diphosphate + H2O. In terms of biological role, required for the formation of a threonylcarbamoyl group on adenosine at position 37 (t(6)A37) in tRNAs that read codons beginning with adenine. Catalyzes the conversion of L-threonine, HCO(3)(-)/CO(2) and ATP to give threonylcarbamoyl-AMP (TC-AMP) as the acyladenylate intermediate, with the release of diphosphate. The polypeptide is Threonylcarbamoyl-AMP synthase (Pseudomonas fluorescens (strain Pf0-1)).